A 310-amino-acid polypeptide reads, in one-letter code: Vomeronasal type-1 receptor 47 (310 aa).

The Extracellular segment spans residues 1–16 (MNENSRLHTHSNIRNT). A helical transmembrane segment spans residues 17-37 (FFSEIGIGISGNSFLLLFHII). Topologically, residues 38–49 (KFFRGHRPRLTD) are cytoplasmic. Residues 50 to 70 (LPIGLLSLIHLLMLLVAAVIA) form a helical membrane-spanning segment. Over 71–91 (TDIFISWRGWNDIICKFLVYL) the chain is Extracellular. The cysteines at positions 85 and 172 are disulfide-linked. Residues 92–114 (YRSLRGLSLCTTSMLSVLQAIIL) form a helical membrane-spanning segment. The Cytoplasmic portion of the chain corresponds to 115–131 (SPRSYCLAKFKRKSSHN). The chain crosses the membrane as a helical span at residues 132–152 (ISCAIIFLSVLYMSISSHLFI). Residues 153-193 (SITATLNLTMNNFLYVSQSCSLLPLSYLMQSMYSTLLVLRE) lie on the Extracellular side of the membrane. N-linked (GlcNAc...) asparagine glycosylation is present at N159. A helical membrane pass occupies residues 194–214 (VFLIGLMVLSTSYMVALLCMH). At 215 to 238 (RKQAQNLQGTSLSLKTAPEQRATQ) the chain is on the cytoplasmic side. The chain crosses the membrane as a helical span at residues 239–259 (TILMLMTFFVLMSIFDSIVSS). Topologically, residues 260-269 (SRAMFLDDST) are extracellular. Residues 270 to 290 (CYSIYIFVMHIYATVSPFVFM) form a helical membrane-spanning segment. Residues 291–310 (STEKHLVNFFRSMCEWIINM) lie on the Cytoplasmic side of the membrane.

It belongs to the G-protein coupled receptor 1 family.

Its subcellular location is the cell membrane. In terms of biological role, putative pheromone receptor implicated in the regulation of social and reproductive behavior. This is Vomeronasal type-1 receptor 47 (Vmn1r47) from Mus musculus (Mouse).